The chain runs to 189 residues: Peptidyl-tRNA hydrolase (189 aa).

Position 14 (His14) interacts with tRNA. Catalysis depends on His19, which acts as the Proton acceptor. TRNA-binding residues include Tyr64, Asn66, and Asn112.

This sequence belongs to the PTH family. As to quaternary structure, monomer.

It is found in the cytoplasm. The catalysed reaction is an N-acyl-L-alpha-aminoacyl-tRNA + H2O = an N-acyl-L-amino acid + a tRNA + H(+). In terms of biological role, hydrolyzes ribosome-free peptidyl-tRNAs (with 1 or more amino acids incorporated), which drop off the ribosome during protein synthesis, or as a result of ribosome stalling. Functionally, catalyzes the release of premature peptidyl moieties from peptidyl-tRNA molecules trapped in stalled 50S ribosomal subunits, and thus maintains levels of free tRNAs and 50S ribosomes. The chain is Peptidyl-tRNA hydrolase from Chlorobium phaeobacteroides (strain BS1).